The chain runs to 259 residues: Hydroxyacylglutathione hydrolase (259 aa).

Positions 56, 58, 60, 61, 112, 133, and 171 each coordinate Zn(2+).

Belongs to the metallo-beta-lactamase superfamily. Glyoxalase II family. Monomer. Zn(2+) is required as a cofactor.

It catalyses the reaction an S-(2-hydroxyacyl)glutathione + H2O = a 2-hydroxy carboxylate + glutathione + H(+). It participates in secondary metabolite metabolism; methylglyoxal degradation; (R)-lactate from methylglyoxal: step 2/2. Its function is as follows. Thiolesterase that catalyzes the hydrolysis of S-D-lactoyl-glutathione to form glutathione and D-lactic acid. The chain is Hydroxyacylglutathione hydrolase from Pseudomonas entomophila (strain L48).